The sequence spans 82 residues: Small ribosomal subunit protein bS18 (82 aa).

Belongs to the bacterial ribosomal protein bS18 family. In terms of assembly, part of the 30S ribosomal subunit. Forms a tight heterodimer with protein bS6.

Its function is as follows. Binds as a heterodimer with protein bS6 to the central domain of the 16S rRNA, where it helps stabilize the platform of the 30S subunit. The chain is Small ribosomal subunit protein bS18 from Bifidobacterium adolescentis (strain ATCC 15703 / DSM 20083 / NCTC 11814 / E194a).